A 1138-amino-acid polypeptide reads, in one-letter code: MVKLSIVLTPQFLSHDQGQLTKELQQHVKSVTCPCEYLRKVINTLADHHHRGTDFGGSPWLHVIIAFPTSYKVVITLWIVYLWVSLLKTIFWSRNGHDGSTDVQQRAWRSNRRRQEGLRSICMHTKKRVSSFRGNKIVLKDVITLRRHVETKVRAKIRKRKVTTKINHHDKINGKRKTARKQKMFQRAQELRRRAEDYHKCKIPPSARKALCNWVRMAAAEHRHSSGLPYWPYLTAETLKNRMGHQPPPPTQQHSITDNSLSLKTPPECLLTPLPPSADDNLKTPPECVLTPLPPSADDNLKTPPECVLTPLPPSADDNLKTPPECLLTPLPPSADDKLKTPPECLLTPLPPSALPSAPPSADDNLKTRAECLLHPLPPSADDNLKTPSERQLTPLPPSAPPSADDNIKTPAERLRGPLPPSADDNLKTPSERQLTPLPPSAPPSADDNIKTPAERLRGPLPPSADDNLKTPSERQLTPLPPSAPPSADDNIKTPAERLRGPLPPSADDNLKTPSERQLTPLPPSAPPSADDNIKTPAERLRGPLPPSADDNLKTPSERQLTPLPPSAPPSADDNIKTPAERLRGPLPPSADDNLKTPSERQLTPLPPSAPPSADDNIKTPAFHPQRMIISRHLPSVSSLPFHPQLHPQQMIISRYLLSVCGFRFHHQPMIISRHLPSVSSLPFHPQLHPQQMIISRHLPSVCGGRFHPQRMIISRHLPSVSSLPFHPQLHPQQMIISRHLPSVCGGRFHPQRMIISRHLPSVSSLPFHPQLHPQQMIISRHLPSVCGGRFHPQRMIISRHLPSVSSLPFHPQLHPQQMIISRHLPSVCGGRFHPQRMIISRHLPSVSSLPFHPQLHPQQMIISRHLPSVCGERLRGPLPPSADDNLKTPSERQLTPLPPSAPPSADDNIKTPAERLRGPLPPSADDNLKTPSERQLTPLPPSAPPSADDNIKTPAERLRGPLPPSADDNLKTPSERQLTPLPPSAPPSADDNIKTPAERLRGPLPPSADDNLKTPPLATQEAEAEKPRKPKRQRAAEMEPPPEPKRRRVGDVEPSRKPKRRRAADVEPSSPEPKRRRVGDVEPSRKPKRRRAADVEPSSPEPKRRRVGDVEPSRKPKRRRAADVEPSLPEPKRRRLS.

Residues 63-87 traverse the membrane as a helical segment; it reads VIIAFPTSYKVVITLWIVYLWVSLL. 3 disordered regions span residues 241–263, 291–620, and 873–1138; these read NRMG…SLSL, TPLP…NIKT, and ERLR…RRLS. The span at 252 to 262 shows a compositional bias: polar residues; that stretch reads QQHSITDNSLS. Residues 349 to 359 show a composition bias toward pro residues; it reads PLPPSALPSAP. Basic and acidic residues-rich tracts occupy residues 406–416, 448–458, 490–500, 532–542, 574–584, 908–918, 950–960, and 992–1002; these read DNIKTPAERLR.

It belongs to the NPIP family.

It localises to the membrane. The protein is Nuclear pore complex-interacting protein family member B4 (NPIPB4) of Homo sapiens (Human).